A 500-amino-acid chain; its full sequence is Lysine--tRNA ligase (500 aa).

The Mg(2+) site is built by Glu-406 and Glu-413.

Belongs to the class-II aminoacyl-tRNA synthetase family. As to quaternary structure, homodimer. Requires Mg(2+) as cofactor.

It localises to the cytoplasm. It catalyses the reaction tRNA(Lys) + L-lysine + ATP = L-lysyl-tRNA(Lys) + AMP + diphosphate. This chain is Lysine--tRNA ligase, found in Sulfolobus acidocaldarius (strain ATCC 33909 / DSM 639 / JCM 8929 / NBRC 15157 / NCIMB 11770).